A 428-amino-acid polypeptide reads, in one-letter code: Glutamate-1-semialdehyde 2,1-aminomutase (428 aa).

At Lys-266 the chain carries N6-(pyridoxal phosphate)lysine.

It belongs to the class-III pyridoxal-phosphate-dependent aminotransferase family. HemL subfamily. In terms of assembly, homodimer. Requires pyridoxal 5'-phosphate as cofactor.

The protein localises to the cytoplasm. The catalysed reaction is (S)-4-amino-5-oxopentanoate = 5-aminolevulinate. The protein operates within porphyrin-containing compound metabolism; protoporphyrin-IX biosynthesis; 5-aminolevulinate from L-glutamyl-tRNA(Glu): step 2/2. The polypeptide is Glutamate-1-semialdehyde 2,1-aminomutase (Herminiimonas arsenicoxydans).